The sequence spans 674 residues: Inorganic pyrophosphatase TTM2 (674 aa).

Residues S248–L410 form the CYTH domain. Disordered regions lie at residues K457 to N498 and R619 to S640. Residues S484–P496 show a composition bias toward basic and acidic residues. Over residues A623–S640 the composition is skewed to low complexity. Residues L650–I670 form a helical membrane-spanning segment.

Mg(2+) is required as a cofactor. Predominantly expressed in the shoot apices of inflorescences.

It is found in the mitochondrion outer membrane. It catalyses the reaction diphosphate + H2O = 2 phosphate + H(+). Exhibits pyrophosphatase activity with stronger affinity for pyrophosphate (PPi), moderate affinity for ATP and ADP, and weak affinity for tripolyphosphate (PPPi). No activity observed toward uridine substrate. Negative regulator of the salicylic acid (SA)-mediated amplification of defense responses against both virulent and avirulent pathogens, including oomycetes (e.g. H.arabidopsidis) and bacteria (e.g. P.syringae). Represses systemic acquired resistance (SAR). This chain is Inorganic pyrophosphatase TTM2, found in Arabidopsis thaliana (Mouse-ear cress).